We begin with the raw amino-acid sequence, 353 residues long: Photosystem II D2 protein (353 aa).

The residue at position 2 (threonine 2) is an N-acetylthreonine. Position 2 is a phosphothreonine (threonine 2). A helical transmembrane segment spans residues cysteine 41–threonine 61. Histidine 118 is a chlorophyll a binding site. The helical transmembrane segment at glycine 125–proline 141 threads the bilayer. Residues glutamine 130 and asparagine 143 each coordinate pheophytin a. The chain crosses the membrane as a helical span at residues valine 153–serine 166. Chlorophyll a is bound at residue histidine 198. The helical transmembrane segment at alanine 208 to aspartate 228 threads the bilayer. The a plastoquinone site is built by histidine 215 and phenylalanine 262. Residue histidine 215 coordinates Fe cation. A Fe cation-binding site is contributed by histidine 269. Residues glycine 279 to arginine 295 form a helical membrane-spanning segment.

This sequence belongs to the reaction center PufL/M/PsbA/D family. PSII is composed of 1 copy each of membrane proteins PsbA, PsbB, PsbC, PsbD, PsbE, PsbF, PsbH, PsbI, PsbJ, PsbK, PsbL, PsbM, PsbT, PsbX, PsbY, PsbZ, Psb30/Ycf12, at least 3 peripheral proteins of the oxygen-evolving complex and a large number of cofactors. It forms dimeric complexes. The D1/D2 heterodimer binds P680, chlorophylls that are the primary electron donor of PSII, and subsequent electron acceptors. It shares a non-heme iron and each subunit binds pheophytin, quinone, additional chlorophylls, carotenoids and lipids. There is also a Cl(-1) ion associated with D1 and D2, which is required for oxygen evolution. The PSII complex binds additional chlorophylls, carotenoids and specific lipids. serves as cofactor.

The protein resides in the plastid. It localises to the chloroplast thylakoid membrane. The enzyme catalyses 2 a plastoquinone + 4 hnu + 2 H2O = 2 a plastoquinol + O2. In terms of biological role, photosystem II (PSII) is a light-driven water:plastoquinone oxidoreductase that uses light energy to abstract electrons from H(2)O, generating O(2) and a proton gradient subsequently used for ATP formation. It consists of a core antenna complex that captures photons, and an electron transfer chain that converts photonic excitation into a charge separation. The D1/D2 (PsbA/PsbD) reaction center heterodimer binds P680, the primary electron donor of PSII as well as several subsequent electron acceptors. D2 is needed for assembly of a stable PSII complex. This chain is Photosystem II D2 protein, found in Olimarabidopsis pumila (Dwarf rocket).